A 244-amino-acid chain; its full sequence is 1-(5-phosphoribosyl)-5-[(5-phosphoribosylamino)methylideneamino] imidazole-4-carboxamide isomerase (244 aa).

The active-site Proton acceptor is the aspartate 10. Aspartate 132 functions as the Proton donor in the catalytic mechanism.

It belongs to the HisA/HisF family.

It localises to the cytoplasm. It carries out the reaction 1-(5-phospho-beta-D-ribosyl)-5-[(5-phospho-beta-D-ribosylamino)methylideneamino]imidazole-4-carboxamide = 5-[(5-phospho-1-deoxy-D-ribulos-1-ylimino)methylamino]-1-(5-phospho-beta-D-ribosyl)imidazole-4-carboxamide. It functions in the pathway amino-acid biosynthesis; L-histidine biosynthesis; L-histidine from 5-phospho-alpha-D-ribose 1-diphosphate: step 4/9. This Xanthomonas oryzae pv. oryzae (strain MAFF 311018) protein is 1-(5-phosphoribosyl)-5-[(5-phosphoribosylamino)methylideneamino] imidazole-4-carboxamide isomerase.